A 122-amino-acid polypeptide reads, in one-letter code: Small ribosomal subunit protein uS13 (122 aa).

The interval 95–122 (GLPVRGQRTHTNARTRKGPAKPIAGKKK) is disordered.

It belongs to the universal ribosomal protein uS13 family. In terms of assembly, part of the 30S ribosomal subunit. Forms a loose heterodimer with protein S19. Forms two bridges to the 50S subunit in the 70S ribosome.

Functionally, located at the top of the head of the 30S subunit, it contacts several helices of the 16S rRNA. In the 70S ribosome it contacts the 23S rRNA (bridge B1a) and protein L5 of the 50S subunit (bridge B1b), connecting the 2 subunits; these bridges are implicated in subunit movement. Contacts the tRNAs in the A and P-sites. The chain is Small ribosomal subunit protein uS13 from Caulobacter vibrioides (strain ATCC 19089 / CIP 103742 / CB 15) (Caulobacter crescentus).